A 392-amino-acid chain; its full sequence is Putative nickel insertion protein (392 aa).

This sequence belongs to the LarC family.

The sequence is that of Putative nickel insertion protein from Pelobacter propionicus (strain DSM 2379 / NBRC 103807 / OttBd1).